A 1116-amino-acid polypeptide reads, in one-letter code: Large proline-rich protein bag6-B (1116 aa).

Residues 7–82 (MDVTVKTLDS…HLVERAPPQT (76 aa)) enclose the Ubiquitin-like domain. Disordered regions lie at residues 76–114 (ERAPPQTQTSTSGPSTSSSTSPSSSNAAPVPGAPERNGN), 170–221 (EGQP…PSEY), 329–385 (STTG…HPHP), 473–502 (PAAPSFNFQPGAAATTPPAPGGATTTAPGA), 533–589 (GGSS…GTDQ), 640–678 (VPVSTSPPQSASQAPPPPSSPAPPAHSAPPPAAAPESLP), and 1058–1080 (TGAKPESSTECVKRELDNSEAQG). Residues 79 to 100 (PPQTQTSTSGPSTSSSTSPSSS) are compositionally biased toward low complexity. Over residues 194 to 207 (RETLPQTTQNADGQ) the composition is skewed to polar residues. Positions 208-219 (SNSTPTSHPSPS) are enriched in low complexity. Residues 344-353 (GNATPSTNTS) show a composition bias toward polar residues. Low complexity-rich tracts occupy residues 482 to 502 (PGAAATTPPAPGGATTTAPGA), 535 to 580 (SSTS…SVPS), and 641 to 652 (PVSTSPPQSASQ). Residues 653-672 (APPPPSSPAPPAHSAPPPAA) are compositionally biased toward pro residues. Over residues 1068–1080 (CVKRELDNSEAQG) the composition is skewed to basic and acidic residues.

As to quaternary structure, component of the bag6/bat3 complex.

The protein resides in the cytoplasm. It is found in the cytosol. Its subcellular location is the nucleus. It localises to the secreted. The protein localises to the extracellular exosome. In terms of biological role, ATP-independent molecular chaperone preventing the aggregation of misfolded and hydrophobic patches-containing proteins. Functions as part of a cytosolic protein quality control complex, the bag6/bat3 complex, which maintains these client proteins in a soluble state and participates in their proper delivery to the endoplasmic reticulum or alternatively can promote their sorting to the proteasome where they undergo degradation. The bag6/bat3 complex is involved in the post-translational delivery of tail-anchored/type II transmembrane proteins to the endoplasmic reticulum membrane. Similarly, the bag6/bat3 complex also functions as a sorting platform for proteins of the secretory pathway that are mislocalized to the cytosol either delivering them to the proteasome for degradation or to the endoplasmic reticulum. The bag6/bat3 complex also plays a role in the endoplasmic reticulum-associated degradation (ERAD), a quality control mechanism that eliminates unwanted proteins of the endoplasmic reticulum through their retrotranslocation to the cytosol and their targeting to the proteasome. It maintains these retrotranslocated proteins in an unfolded yet soluble state condition in the cytosol to ensure their proper delivery to the proteasome. Also required for selective ubiquitin-mediated degradation of defective nascent chain polypeptides by the proteasome. Also involved in endoplasmic reticulum stress-induced pre-emptive quality control, a mechanism that selectively attenuates the translocation of newly synthesized proteins into the endoplasmic reticulum and reroutes them to the cytosol for proteasomal degradation. May ensure the proper degradation of these proteins and thereby protects the endoplasmic reticulum from protein overload upon stress. By stabilizing a large spectrum of proteins, may indirectly affect different biological processes including apoptosis. By controlling the steady-state expression of the IGF1R receptor, indirectly regulates the insulin-like growth factor receptor signaling pathway. Its function is as follows. When nuclear, may also act as a component of some chromatin regulator complex. This is Large proline-rich protein bag6-B from Xenopus laevis (African clawed frog).